A 310-amino-acid chain; its full sequence is Porphobilinogen deaminase (310 aa).

C243 is modified (S-(dipyrrolylmethanemethyl)cysteine).

This sequence belongs to the HMBS family. In terms of assembly, monomer. Requires dipyrromethane as cofactor.

The catalysed reaction is 4 porphobilinogen + H2O = hydroxymethylbilane + 4 NH4(+). Its pathway is porphyrin-containing compound metabolism; protoporphyrin-IX biosynthesis; coproporphyrinogen-III from 5-aminolevulinate: step 2/4. Functionally, tetrapolymerization of the monopyrrole PBG into the hydroxymethylbilane pre-uroporphyrinogen in several discrete steps. This is Porphobilinogen deaminase from Methylobacillus flagellatus (strain ATCC 51484 / DSM 6875 / VKM B-1610 / KT).